A 452-amino-acid chain; its full sequence is UPF0210 protein Csac_1314 (452 aa).

It belongs to the UPF0210 family. In terms of assembly, homodimer.

This is UPF0210 protein Csac_1314 from Caldicellulosiruptor saccharolyticus (strain ATCC 43494 / DSM 8903 / Tp8T 6331).